The chain runs to 1060 residues: Carbamoyl phosphate synthase large chain (1060 aa).

The carboxyphosphate synthetic domain stretch occupies residues 1–401 (MPKRTDIRKI…SLLKACRSLE (401 aa)). Arg129, Arg169, Gly175, Gly176, Arg208, Ile210, Glu215, Gly241, Ile242, His243, Gln284, and Glu298 together coordinate ATP. The ATP-grasp 1 domain maps to 133–327 (KQLMEELNQP…IAKLAAKIAV (195 aa)). The Mg(2+) site is built by Gln284, Glu298, and Asn300. Positions 284, 298, and 300 each coordinate Mn(2+). The tract at residues 402 to 546 (IGVDHIKIAD…YSTYAVENES (145 aa)) is oligomerization domain. The carbamoyl phosphate synthetic domain stretch occupies residues 547–929 (LISDKASILV…ALYKAFEAAY (383 aa)). Positions 671-861 (EATLQALNIP…MAQVATKVIL (191 aa)) constitute an ATP-grasp 2 domain. Arg707, Ala746, Leu748, Glu752, Gly777, Val778, His779, Ser780, Gln820, and Glu832 together coordinate ATP. Residues Gln820, Glu832, and Asn834 each coordinate Mg(2+). Residues Gln820, Glu832, and Asn834 each coordinate Mn(2+). In terms of domain architecture, MGS-like spans 930–1060 (LHMPDYGNIV…SRAFTLKVLD (131 aa)). Residues 930–1060 (LHMPDYGNIV…SRAFTLKVLD (131 aa)) form an allosteric domain region.

The protein belongs to the CarB family. As to quaternary structure, composed of two chains; the small (or glutamine) chain promotes the hydrolysis of glutamine to ammonia, which is used by the large (or ammonia) chain to synthesize carbamoyl phosphate. Tetramer of heterodimers (alpha,beta)4. Requires Mg(2+) as cofactor. It depends on Mn(2+) as a cofactor.

It catalyses the reaction hydrogencarbonate + L-glutamine + 2 ATP + H2O = carbamoyl phosphate + L-glutamate + 2 ADP + phosphate + 2 H(+). It carries out the reaction hydrogencarbonate + NH4(+) + 2 ATP = carbamoyl phosphate + 2 ADP + phosphate + 2 H(+). It participates in amino-acid biosynthesis; L-arginine biosynthesis; carbamoyl phosphate from bicarbonate: step 1/1. The protein operates within pyrimidine metabolism; UMP biosynthesis via de novo pathway; (S)-dihydroorotate from bicarbonate: step 1/3. Large subunit of the glutamine-dependent carbamoyl phosphate synthetase (CPSase). CPSase catalyzes the formation of carbamoyl phosphate from the ammonia moiety of glutamine, carbonate, and phosphate donated by ATP, constituting the first step of 2 biosynthetic pathways, one leading to arginine and/or urea and the other to pyrimidine nucleotides. The large subunit (synthetase) binds the substrates ammonia (free or transferred from glutamine from the small subunit), hydrogencarbonate and ATP and carries out an ATP-coupled ligase reaction, activating hydrogencarbonate by forming carboxy phosphate which reacts with ammonia to form carbamoyl phosphate. The protein is Carbamoyl phosphate synthase large chain of Streptococcus agalactiae serotype Ia (strain ATCC 27591 / A909 / CDC SS700).